The primary structure comprises 251 residues: Probable transcriptional regulatory protein Caul_0780 (251 aa).

Belongs to the TACO1 family.

Its subcellular location is the cytoplasm. This is Probable transcriptional regulatory protein Caul_0780 from Caulobacter sp. (strain K31).